A 440-amino-acid chain; its full sequence is Tryptophan aminotransferase-related protein 2 (440 aa).

The helical transmembrane segment at 7–26 threads the bilayer; that stretch reads FLSWRNMLVLSLAINFSLIL. Residues tyrosine 112, 154–155, asparagine 222, 242–245, 265–268, and arginine 276 contribute to the pyridoxal 5'-phosphate site; these read ST, DLAY, and TASK. At lysine 268 the chain carries N6-(pyridoxal phosphate)lysine.

This sequence belongs to the alliinase family. Requires pyridoxal 5'-phosphate as cofactor. As to expression, expressed in roots, cotyledons and in the apical parts of hypocotyls. In roots, restricted to the provasculature of meristematic regions. Detected on the inner side of the apical hooks.

Its subcellular location is the membrane. It carries out the reaction L-tryptophan + 2-oxoglutarate = indole-3-pyruvate + L-glutamate. The catalysed reaction is L-tryptophan + pyruvate = indole-3-pyruvate + L-alanine. It participates in plant hormone metabolism; auxin biosynthesis. Inhibited by L-kynurenine. Its function is as follows. Involved in auxin production. Both TAA1 and TAR2 are required for maintaining proper auxin levels in roots, while TAA1, TAR1 and TAR2 are required for proper embryo patterning. Involved in the maintenance of the root stem cell niches. This chain is Tryptophan aminotransferase-related protein 2 (TAR2), found in Arabidopsis thaliana (Mouse-ear cress).